The following is an 804-amino-acid chain: E3 ubiquitin-protein ligase RNF10 (804 aa).

Composition is skewed to low complexity over residues 1–31 (MPQS…SGSS), 78–90 (SNQS…QKSK), and 104–113 (SKPFSSSSNG). A disordered region spans residues 1-134 (MPQSSPSAAA…AEFSPAQFSG (134 aa)). Ser-5 is subject to Phosphoserine. Residue Ser-110 is modified to Phosphoserine. The span at 114–124 (GRRDEVAEAQR) shows a compositional bias: basic and acidic residues. The residue at position 128 (Ser-128) is a Phosphoserine. An RING-type zinc finger spans residues 225–267 (CPICLYPPTAAKITRCGHIFCWACILHYLSLSEKTWSKCPICY). 3 disordered regions span residues 589-611 (DIEK…ERRI), 646-665 (DSAL…LSPL), and 715-804 (KADG…VHTK). Residues 601-611 (AREERRRERRI) are compositionally biased toward basic and acidic residues. The span at 646-655 (DSALGPTSTE) shows a compositional bias: polar residues. Over residues 715 to 729 (KADGWPKTAPKKDDN) the composition is skewed to basic and acidic residues. A compositionally biased stretch (polar residues) spans 795 to 804 (LFSTSVVHTK).

This sequence belongs to the RNF10 family. In terms of assembly, interacts with MEOX2.

It is found in the cytoplasm. The protein localises to the nucleus. The catalysed reaction is S-ubiquitinyl-[E2 ubiquitin-conjugating enzyme]-L-cysteine + [acceptor protein]-L-lysine = [E2 ubiquitin-conjugating enzyme]-L-cysteine + N(6)-ubiquitinyl-[acceptor protein]-L-lysine.. It participates in protein modification; protein ubiquitination. In terms of biological role, E3 ubiquitin-protein ligase that catalyzes monoubiquitination of 40S ribosomal proteins RPS2/us5 and RPS3/us3 in response to ribosome stalling. Part of a ribosome quality control that takes place when ribosomes have stalled during translation initiation (iRQC): RNF10 acts by mediating monoubiquitination of RPS2/us5 and RPS3/us3, promoting their degradation by the proteasome. Also promotes ubiquitination of 40S ribosomal proteins in response to ribosome stalling during translation elongation. The action of RNF10 in iRQC is counteracted by USP10. May also act as a transcriptional factor involved in the regulation of MAG (Myelin-associated glycoprotein) expression. Acts as a regulator of Schwann cell differentiation and myelination. The chain is E3 ubiquitin-protein ligase RNF10 from Mus musculus (Mouse).